Here is a 372-residue protein sequence, read N- to C-terminus: uncharacterized protein (372 aa).

Residues 1 to 24 (MSYYQIIVCILASISYIILLEVIA) form the signal peptide. Positions 92–215 (PNRNDTDASY…SSYNLLWSDL (124 aa)) constitute a PA domain. A helical membrane pass occupies residues 236 to 256 (FWPFLLCFSPSIIMLITVQAL). A Phosphoserine modification is found at Ser280. The RING-type; atypical zinc finger occupies 321–363 (CVICLESFTKGDKVVALPCKHEFHRPCIAKWIVDYRHACPTCN).

It is found in the golgi apparatus membrane. Its subcellular location is the vacuole membrane. This is an uncharacterized protein from Schizosaccharomyces pombe (strain 972 / ATCC 24843) (Fission yeast).